The following is a 553-amino-acid chain: Dihydroxy-acid dehydratase (553 aa).

Aspartate 78 provides a ligand contact to Mg(2+). Cysteine 119 is a binding site for [2Fe-2S] cluster. Mg(2+)-binding residues include aspartate 120 and lysine 121. Lysine 121 is subject to N6-carboxylysine. Cysteine 193 contacts [2Fe-2S] cluster. Glutamate 441 contacts Mg(2+). Serine 467 functions as the Proton acceptor in the catalytic mechanism.

The protein belongs to the IlvD/Edd family. Homodimer. The cofactor is [2Fe-2S] cluster. Requires Mg(2+) as cofactor.

The catalysed reaction is (2R)-2,3-dihydroxy-3-methylbutanoate = 3-methyl-2-oxobutanoate + H2O. It catalyses the reaction (2R,3R)-2,3-dihydroxy-3-methylpentanoate = (S)-3-methyl-2-oxopentanoate + H2O. It participates in amino-acid biosynthesis; L-isoleucine biosynthesis; L-isoleucine from 2-oxobutanoate: step 3/4. Its pathway is amino-acid biosynthesis; L-valine biosynthesis; L-valine from pyruvate: step 3/4. Its function is as follows. Functions in the biosynthesis of branched-chain amino acids. Catalyzes the dehydration of (2R,3R)-2,3-dihydroxy-3-methylpentanoate (2,3-dihydroxy-3-methylvalerate) into 2-oxo-3-methylpentanoate (2-oxo-3-methylvalerate) and of (2R)-2,3-dihydroxy-3-methylbutanoate (2,3-dihydroxyisovalerate) into 2-oxo-3-methylbutanoate (2-oxoisovalerate), the penultimate precursor to L-isoleucine and L-valine, respectively. The protein is Dihydroxy-acid dehydratase of Geobacter sulfurreducens (strain ATCC 51573 / DSM 12127 / PCA).